The following is a 474-amino-acid chain: tRNA-2-methylthio-N(6)-dimethylallyladenosine synthase (474 aa).

One can recognise an MTTase N-terminal domain in the interval 3 to 120 (KKLHIKTWGC…LPEMINHVQG (118 aa)). Positions 12, 49, 83, 157, 161, and 164 each coordinate [4Fe-4S] cluster. The Radical SAM core domain maps to 143 to 375 (RADGPTAFVS…QDRITKQAMR (233 aa)). Positions 378 to 441 (RLMLGTVQRI…TNSLRGIVVR (64 aa)) constitute a TRAM domain.

This sequence belongs to the methylthiotransferase family. MiaB subfamily. As to quaternary structure, monomer. The cofactor is [4Fe-4S] cluster.

The protein localises to the cytoplasm. The enzyme catalyses N(6)-dimethylallyladenosine(37) in tRNA + (sulfur carrier)-SH + AH2 + 2 S-adenosyl-L-methionine = 2-methylsulfanyl-N(6)-dimethylallyladenosine(37) in tRNA + (sulfur carrier)-H + 5'-deoxyadenosine + L-methionine + A + S-adenosyl-L-homocysteine + 2 H(+). Its function is as follows. Catalyzes the methylthiolation of N6-(dimethylallyl)adenosine (i(6)A), leading to the formation of 2-methylthio-N6-(dimethylallyl)adenosine (ms(2)i(6)A) at position 37 in tRNAs that read codons beginning with uridine. The sequence is that of tRNA-2-methylthio-N(6)-dimethylallyladenosine synthase from Pectobacterium atrosepticum (strain SCRI 1043 / ATCC BAA-672) (Erwinia carotovora subsp. atroseptica).